Reading from the N-terminus, the 61-residue chain is Ubiquinol-cytochrome c reductase complex assembly factor 6 (61 aa).

Residues methionine 1–glutamine 9 are Mitochondrial matrix-facing. The chain crosses the membrane as a helical span at residues tyrosine 10 to tyrosine 32. Topologically, residues lysine 33–alanine 61 are mitochondrial intermembrane.

Belongs to the UQCC6 family. Interacts with sloth1; the interaction stabilizes both components. In terms of tissue distribution, expressed in the brain.

It localises to the mitochondrion inner membrane. The protein localises to the mitochondrion. Required for the assembly and stability of the mitochondrial ubiquinol-cytochrome c reductase complex (complex III (CIII) or cytochrome b-c1 complex), a multisubunit transmembrane complex that is part of the mitochondrial electron transport chain (ETC) which drives oxidative phosphorylation. This is Ubiquinol-cytochrome c reductase complex assembly factor 6 from Drosophila melanogaster (Fruit fly).